A 247-amino-acid polypeptide reads, in one-letter code: MKQIDLNVDLAEGCANDQQLLQLVSSANVCCGLHAGDYNEIRKAILWAKENDVRIGAHPSFPDRENFGRTNMQLPDDELKACLFYQLGAVKALCDASGVTMEYVKPHGALYNMAAKDPHLAALIAETVKSVDPSLKLMGLSGSIMLTVAEQHGLATISEVFADRHYLADGSLVPRTRDDAMVENDEEAISQVLQMVLEGTVPTVDGGNVAIKADSICLHGDGEHAVVFAKRIRRELKEKGILVTSSI.

This sequence belongs to the LamB/PxpA family. Forms a complex composed of PxpA, PxpB and PxpC.

The catalysed reaction is 5-oxo-L-proline + ATP + 2 H2O = L-glutamate + ADP + phosphate + H(+). Catalyzes the cleavage of 5-oxoproline to form L-glutamate coupled to the hydrolysis of ATP to ADP and inorganic phosphate. The chain is 5-oxoprolinase subunit A from Histophilus somni (strain 129Pt) (Haemophilus somnus).